A 626-amino-acid polypeptide reads, in one-letter code: Putative folylpolyglutamate synthase (626 aa).

G144–S147 is a binding site for ATP. Residues S168, E235, and H263 each coordinate Mg(2+). Residues R412 and D430 each coordinate ATP.

This sequence belongs to the folylpolyglutamate synthase family.

It catalyses the reaction (6S)-5,6,7,8-tetrahydrofolyl-(gamma-L-Glu)(n) + L-glutamate + ATP = (6S)-5,6,7,8-tetrahydrofolyl-(gamma-L-Glu)(n+1) + ADP + phosphate + H(+). It participates in cofactor biosynthesis; tetrahydrofolylpolyglutamate biosynthesis. Its function is as follows. Conversion of folates to polyglutamate derivatives. This is Putative folylpolyglutamate synthase (folC) from Dictyostelium discoideum (Social amoeba).